The primary structure comprises 598 residues: Leucine aminopeptidase 2, chloroplastic (598 aa).

The transit peptide at methionine 1–alanine 71 directs the protein to the chloroplast. Positions 367 and 372 each coordinate Mn(2+). Lysine 379 is an active-site residue. Aspartate 392, aspartate 452, and glutamate 454 together coordinate Mn(2+). Residue arginine 456 is part of the active site.

This sequence belongs to the peptidase M17 family. As to quaternary structure, homohexamer (dimer of homotrimers). The cofactor is Mn(2+).

It is found in the plastid. It localises to the chloroplast. It carries out the reaction Release of an N-terminal amino acid, Xaa-|-Yaa-, in which Xaa is preferably Leu, but may be other amino acids including Pro although not Arg or Lys, and Yaa may be Pro. Amino acid amides and methyl esters are also readily hydrolyzed, but rates on arylamides are exceedingly low.. The catalysed reaction is Release of N-terminal proline from a peptide.. Presumably involved in the processing and regular turnover of intracellular proteins. Catalyzes the removal of unsubstituted N-terminal amino acids from various peptides. The polypeptide is Leucine aminopeptidase 2, chloroplastic (Oryza sativa subsp. japonica (Rice)).